The following is a 91-amino-acid chain: Acyl carrier protein (91 aa).

The 76-residue stretch at 6-81 folds into the Carrier domain; the sequence is EEIIAELGQI…DIVAYIQKLE (76 aa). Ser-41 carries the O-(pantetheine 4'-phosphoryl)serine modification.

This sequence belongs to the acyl carrier protein (ACP) family. In terms of processing, 4'-phosphopantetheine is transferred from CoA to a specific serine of apo-ACP by AcpS. This modification is essential for activity because fatty acids are bound in thioester linkage to the sulfhydryl of the prosthetic group.

Its subcellular location is the cytoplasm. The protein operates within lipid metabolism; fatty acid biosynthesis. Carrier of the growing fatty acid chain in fatty acid biosynthesis. This is Acyl carrier protein from Rhodococcus erythropolis (strain PR4 / NBRC 100887).